Here is a 279-residue protein sequence, read N- to C-terminus: Prostatic spermine-binding protein (279 aa).

An N-terminal signal peptide occupies residues 1–17 (MLLLVTLALLAGPTCRA). Gln18 carries the post-translational modification Pyrrolidone carboxylic acid. Residues 18 to 151 (QNILGNNVGT…LNGMGFKWKN (134 aa)) enclose the Jacalin-type lectin domain. Asn62 carries an N-linked (GlcNAc...) asparagine glycan. Composition is skewed to acidic residues over residues 160 to 177 (DDDK…NEED) and 185 to 279 (NDHD…EEEE). A disordered region spans residues 160 to 279 (DDDKEDDDDE…DDDNGDEEEE (120 aa)).

It to mouse SBP. Prostate.

Spermine-binding protein is an androgen regulated ventral prostate glycoprotein that binds various polyamines. The sequence is that of Prostatic spermine-binding protein (Sbp) from Rattus norvegicus (Rat).